The sequence spans 28 residues: Cruzioseptin-3 (28 aa).

A Glutamine amide modification is found at Gln-25. Residues 27–28 (EQ) constitute a propeptide that is removed on maturation.

As to expression, expressed by the skin glands.

Its subcellular location is the secreted. Its function is as follows. Has antimicrobial activity against Gram-negative bacterium E.coli (MIC=13.32 uM), against Gram-positive bacterium S.aureus (MIC=13.32 uM) and against fungus C.albicans (MIC=13.32 uM). At higher concentrations also has a bactericidal and fungicidal effect. Has hemagglutinating activity against horse erythrocytes. This chain is Cruzioseptin-3, found in Cruziohyla calcarifer (Splendid leaf frog).